The primary structure comprises 90 residues: Large ribosomal subunit protein bL27 (90 aa).

Residues 1–21 (MAHKKAGGSSRNGRDSQAKRL) are disordered.

The protein belongs to the bacterial ribosomal protein bL27 family.

In Laribacter hongkongensis (strain HLHK9), this protein is Large ribosomal subunit protein bL27.